Consider the following 547-residue polypeptide: MTAKDILFDSDARAKLKVGVDKLANAVKVTLGPAGRNVLIDKKFGAPTSTKDGVTVAKEIELSDPFENMGAQMVREVASKTSDVAGDGTTTATVLAQAIYREGLKNVAAGARPIDLKRGIDRAVKEVVQELRNISRSISGKKEIAQVGTISANNDPVIGDLIADAMDKVGKDGVITVEEAKGMDTELKVVEGMQFDRGYLSPYFVTNSETMDAELEDPLILIYDKKISNMKELLPILEKSAQSGRPLLIISEDIEGEALATIVVNKLRGTLRVCAVKAPGFGDRRKAMLEDIAILTGGTVISEEKGYKLENATISYLGQAGRVTVDKDNTTIVEGKGGAEEIKARINEIKGQVEKSTSDYDTEKLQERLAKLSGGVAVLNIGASTEVEMKEKKARVEDALHATRAAVQEGIVVGGGVALIRAIKGLDRAIADNEDQKTGIEIIRRALEEPLRQIVANTGTTDGAVVLERVKAGTGDFGFNARTEQYENLVEAGVVDPTKVTRSALENAASVASILLTTEAAITDVKEEKSDMPAMPPGGMGGMGGMY.

ATP-binding positions include 30-33 (TLGP), Lys-51, 87-91 (DGTTT), Gly-415, and Asp-496.

It belongs to the chaperonin (HSP60) family. Forms a cylinder of 14 subunits composed of two heptameric rings stacked back-to-back. Interacts with the co-chaperonin GroES.

Its subcellular location is the cytoplasm. It carries out the reaction ATP + H2O + a folded polypeptide = ADP + phosphate + an unfolded polypeptide.. Its function is as follows. Together with its co-chaperonin GroES, plays an essential role in assisting protein folding. The GroEL-GroES system forms a nano-cage that allows encapsulation of the non-native substrate proteins and provides a physical environment optimized to promote and accelerate protein folding. The sequence is that of Chaperonin GroEL from Pelodictyon phaeoclathratiforme (strain DSM 5477 / BU-1).